An 85-amino-acid polypeptide reads, in one-letter code: Large ribosomal subunit protein bL27 (85 aa).

A disordered region spans residues 1–22 (MAHKKAGGSTRNGRDSEAKRMG).

It belongs to the bacterial ribosomal protein bL27 family.

The sequence is that of Large ribosomal subunit protein bL27 from Escherichia coli O6:K15:H31 (strain 536 / UPEC).